A 287-amino-acid polypeptide reads, in one-letter code: Transmembrane protein 71 (287 aa).

The interval 1–25 (MYRDSPLMSTPVANDSRSDEGPSGK) is disordered. 2 helical membrane-spanning segments follow: residues 218-238 (AGLM…LVIS) and 244-264 (FVGG…IAYV).

Belongs to the TMEM71 family.

The protein localises to the membrane. The sequence is that of Transmembrane protein 71 (Tmem71) from Mus musculus (Mouse).